A 171-amino-acid chain; its full sequence is Co-chaperone protein HscB homolog (171 aa).

The J domain maps to 2 to 74; that stretch reads NHFELFGLPN…VTRAEYILSE (73 aa).

This sequence belongs to the HscB family. Interacts with HscA and stimulates its ATPase activity.

In terms of biological role, co-chaperone involved in the maturation of iron-sulfur cluster-containing proteins. Seems to help targeting proteins to be folded toward HscA. This chain is Co-chaperone protein HscB homolog, found in Aliivibrio salmonicida (strain LFI1238) (Vibrio salmonicida (strain LFI1238)).